The sequence spans 447 residues: Argininosuccinate synthase (447 aa).

ATP contacts are provided by residues 17-25 and Ala-43; that span reads AFSGGLDTS. Position 99 (Tyr-99) interacts with L-citrulline. The ATP site is built by Gly-129 and Thr-131. Residues Thr-131, Asn-135, and Asp-136 each coordinate L-aspartate. An L-citrulline-binding site is contributed by Asn-135. Asp-136 provides a ligand contact to ATP. The L-citrulline site is built by Arg-139 and Ser-192. Asp-194 is a binding site for ATP. Residues Thr-201, Glu-203, and Glu-280 each coordinate L-citrulline.

Belongs to the argininosuccinate synthase family. Type 2 subfamily. As to quaternary structure, homotetramer.

Its subcellular location is the cytoplasm. The enzyme catalyses L-citrulline + L-aspartate + ATP = 2-(N(omega)-L-arginino)succinate + AMP + diphosphate + H(+). It participates in amino-acid biosynthesis; L-arginine biosynthesis; L-arginine from L-ornithine and carbamoyl phosphate: step 2/3. This chain is Argininosuccinate synthase (argG), found in Salmonella typhi.